Consider the following 117-residue polypeptide: Ribonuclease P protein component (117 aa).

This sequence belongs to the RnpA family. In terms of assembly, consists of a catalytic RNA component (M1 or rnpB) and a protein subunit.

The enzyme catalyses Endonucleolytic cleavage of RNA, removing 5'-extranucleotides from tRNA precursor.. Functionally, RNaseP catalyzes the removal of the 5'-leader sequence from pre-tRNA to produce the mature 5'-terminus. It can also cleave other RNA substrates such as 4.5S RNA. The protein component plays an auxiliary but essential role in vivo by binding to the 5'-leader sequence and broadening the substrate specificity of the ribozyme. The polypeptide is Ribonuclease P protein component (Thermotoga sp. (strain RQ2)).